The primary structure comprises 516 residues: Facilitated glucose transporter homolog (516 aa).

The tract at residues 1-37 (MNAVVASQNKNDRSFSNMESESSSNVEKSEKENHHQS) is disordered. Residues 1–47 (MNAVVASQNKNDRSFSNMESESSSNVEKSEKENHHQSLPDENWTPFL) lie on the Cytoplasmic side of the membrane. A compositionally biased stretch (low complexity) spans 14-26 (SFSNMESESSSNV). A compositionally biased stretch (basic and acidic residues) spans 27 to 37 (EKSEKENHHQS). The helical transmembrane segment at 48–68 (FFCISSIALASFQDGFQIGCI) threads the bilayer. Topologically, residues 69–101 (NAPGPLIIDWIKKCHFELFGEVLSQYQADFIWS) are extracellular. The chain crosses the membrane as a helical span at residues 102–122 (VAVSMFSVGGMFGSFCSGFLA). Residues 123 to 138 (DKFGRKSTLLYNNILA) are Cytoplasmic-facing. A helical membrane pass occupies residues 139–159 (LLAAVCLSTSKLFNFYPMIVF). The Extracellular portion of the chain corresponds to 160-161 (GR). A helical membrane pass occupies residues 162–182 (FLVGLNCGITSGLVPMFLTEL). The Cytoplasmic segment spans residues 183–200 (APANLRGKCGSFHQLNIS). Residues 201-221 (VAIVLSQALGLPQIFGTQVGW) traverse the membrane as a helical segment. Position 222 (Pro222) is a topological domain, extracellular. The helical transmembrane segment at 223–243 (YIFACVAIPTFLQLATIPFCV) threads the bilayer. At 244–306 (ESPKYLISKL…SLFKGDNQWP (63 aa)) the chain is on the cytoplasmic side. Residues 307-327 (MIVSILMMFSQQFSGISAVTF) traverse the membrane as a helical segment. Residues 328–344 (YSTLIFKRNGLSGNEPM) lie on the Extracellular side of the membrane. The chain crosses the membrane as a helical span at residues 345 to 365 (YATVGFGCIKLIATFGCLFLI). Over 366–376 (DHPKFGRKRLH) the chain is Cytoplasmic. Residues 377–397 (IAGLSGMCISSILIVITLTLS) traverse the membrane as a helical segment. Residues 398-409 (NAGYHWASYMNV) are Extracellular-facing. Residues 410 to 430 (LFILSFVVTFAFGPGPIPWFF) traverse the membrane as a helical segment. At 431–444 (TSELFDSATRGRAA) the chain is on the cytoplasmic side. The chain crosses the membrane as a helical span at residues 445-465 (AVSATSNWVANWMVGLTFLPI). Over 466-471 (NNIIHQ) the chain is Extracellular. A helical transmembrane segment spans residues 472-492 (YAFLMFTFFTFTFAIFTWKFV). At 493–516 (PETKGKSPSAIRKELAFMRKRICS) the chain is on the cytoplasmic side.

The protein belongs to the major facilitator superfamily. Sugar transporter (TC 2.A.1.1) family. As to expression, expressed in seam cells from the early embryonic stage through the L2 stage (at protein level).

It is found in the cell membrane. Its function is as follows. Appears to have no transport activity for glucose. This is Facilitated glucose transporter homolog from Caenorhabditis elegans.